A 240-amino-acid chain; its full sequence is MSFERLQRDLHEAIEGVNRYNPENVAELAACVQAMVAENKYDKDIVLTILKLYQLNPERYDENVVRQVLLKTLMVLPSSDFALAKCLIDTNRIGSQELRRIFDLGAVLESCNFAVFWKLMKGTYKPTTNPNEPFKVPAEISKMIKPMAGFEDAIKHYACRVISVTFQNIEKKLLSSLLGGASDKEVTALAKKFGWETKENGEVFFVANHEGTIKTRNIDEKIQFSHVADLLTSNVPPLAF.

A PCI domain is found at 41-221 (YDKDIVLTIL…TIKTRNIDEK (181 aa)).

The protein belongs to the eIF-3 subunit K family. As to quaternary structure, component of the eukaryotic translation initiation factor 3 (eIF-3) complex.

The protein resides in the cytoplasm. Component of the eukaryotic translation initiation factor 3 (eIF-3) complex, which is involved in protein synthesis of a specialized repertoire of mRNAs and, together with other initiation factors, stimulates binding of mRNA and methionyl-tRNAi to the 40S ribosome. The eIF-3 complex specifically targets and initiates translation of a subset of mRNAs involved in cell proliferation. In Caenorhabditis briggsae, this protein is Eukaryotic translation initiation factor 3 subunit K.